A 307-amino-acid chain; its full sequence is Ribosomal RNA small subunit methyltransferase H (307 aa).

S-adenosyl-L-methionine is bound by residues 34–36 (GGH), aspartate 53, leucine 88, aspartate 102, and glutamine 109.

The protein belongs to the methyltransferase superfamily. RsmH family.

It is found in the cytoplasm. The enzyme catalyses cytidine(1402) in 16S rRNA + S-adenosyl-L-methionine = N(4)-methylcytidine(1402) in 16S rRNA + S-adenosyl-L-homocysteine + H(+). Specifically methylates the N4 position of cytidine in position 1402 (C1402) of 16S rRNA. This is Ribosomal RNA small subunit methyltransferase H from Sulfurimonas denitrificans (strain ATCC 33889 / DSM 1251) (Thiomicrospira denitrificans (strain ATCC 33889 / DSM 1251)).